Here is a 385-residue protein sequence, read N- to C-terminus: Homoserine O-succinyltransferase (385 aa).

The AB hydrolase-1 domain occupies 51-359; it reads NAILICHALS…EATEGHDAFL (309 aa). Ser-157 (nucleophile) is an active-site residue. Arg-227 serves as a coordination point for substrate. Active-site residues include Asp-322 and His-355. Position 356 (Asp-356) interacts with substrate.

The protein belongs to the AB hydrolase superfamily. MetX family. In terms of assembly, homodimer.

It localises to the cytoplasm. It catalyses the reaction L-homoserine + succinyl-CoA = O-succinyl-L-homoserine + CoA. Its pathway is amino-acid biosynthesis; L-methionine biosynthesis via de novo pathway; O-succinyl-L-homoserine from L-homoserine: step 1/1. Transfers a succinyl group from succinyl-CoA to L-homoserine, forming succinyl-L-homoserine. The protein is Homoserine O-succinyltransferase of Marinomonas sp. (strain MWYL1).